A 487-amino-acid polypeptide reads, in one-letter code: G-patch domain and KOW motifs-containing protein (487 aa).

Disordered regions lie at residues 65 to 121 (HKNR…PLLM), 181 to 232 (VKPL…TGSA), and 295 to 367 (KVHQ…RPEP). Residues 88–116 (AVLSQAVKELIEESRRAQEDNSETNQTLS) are a coiled coil. Basic and acidic residues-rich tracts occupy residues 96 to 106 (ELIEESRRAQE) and 200 to 209 (SALKHLEPQK). The G-patch domain maps to 154–200 (VQQYGMAMLRGMGWKEGEGIGRTFKQDVKPLEQKLRPKGLGLGADRS). The KOW 1 domain maps to 226–253 (GLGTGSAVQIQSGAYKDMYGKVEGIDPD). 2 stretches are compositionally biased toward basic and acidic residues: residues 295–333 (KVHQESKVEPHRDRTPEKEQGRKGGEKRSESSRNADVKL) and 352–367 (RSPEQEKEKKKIRPEP). The region spanning 428–455 (PKEEGEHVMVVLGKYRGMVGKILHRDKQ) is the KOW 2 domain.

Belongs to the MOS2 family. Component of the minor spliceosome, which splices U12-type introns.

Its subcellular location is the nucleus. Its function is as follows. RNA-binding protein involved in pre-mRNA splicing. This Xenopus laevis (African clawed frog) protein is G-patch domain and KOW motifs-containing protein (gpkow).